We begin with the raw amino-acid sequence, 400 residues long: Elongation factor Tu (400 aa).

Residues 10 to 209 enclose the tr-type G domain; it reads KPHVNVGTIG…AVDSYIPTPE (200 aa). Residues 19–26 form a G1 region; sequence GHVDHGKT. 19–26 contacts GTP; it reads GHVDHGKT. Mg(2+) is bound at residue Thr26. The tract at residues 60-64 is G2; it reads GITIA. The G3 stretch occupies residues 81-84; it reads DCPG. GTP is bound by residues 81–85 and 136–139; these read DCPGH and NKVD. The G4 stretch occupies residues 136–139; sequence NKVD. Positions 174 to 176 are G5; sequence SAL.

The protein belongs to the TRAFAC class translation factor GTPase superfamily. Classic translation factor GTPase family. EF-Tu/EF-1A subfamily. In terms of assembly, monomer.

The protein resides in the cytoplasm. The catalysed reaction is GTP + H2O = GDP + phosphate + H(+). In terms of biological role, GTP hydrolase that promotes the GTP-dependent binding of aminoacyl-tRNA to the A-site of ribosomes during protein biosynthesis. This chain is Elongation factor Tu, found in Moorella thermoacetica (strain ATCC 39073 / JCM 9320).